The sequence spans 1003 residues: MSEDSEKEDYSDRTISDEDESDEDNFMKFVNEDIHQCALLTADSISDPFFPRTTQILLEYQLGRWVPRLRKPRDLYGVSSSGPLSPTRWPYHCEVIDEKIEHIDWTPSNPEPMYIPTGLEVEPLYANSKEETVVYLAEDAYKEPCFVYSRVGGNRTPLKQPVDNCDDTLMFEARFESGNLQKVVKVGEYEYQLTVRPDLFTNKHTQWYYFQVTNTQAGIVYRFTITNFTKPASLYNRGMRPLFYSEKEASAHNIGWQRIGDQIKYYRNNQGQDRHHHFSLTWTFQFPHSKDTCYFAHCYPYTYTNLQEYLSGINNDPVRSKFCKIRVLCHTIARNMVYILTITTPLKNSESRKRKAVILTARVHPGETNSSWIMKGFLDYILGNSSDAKLLRDTFVFKVVPMLNPDGVIVGNYRCSLAGRDLNRNYTSLLKESFPSVWYTRNMIRRLMEKREVILYCDLHGHSKKENIFMYGCDGSDRCKALYLQQRIFPLMLSKNCPDKFSFSSCKFNIQKSKEGTGRVVMWKMGIRNSFTMEATFCGSTLGNKRGTHFNTKDLESMGYHFCDSLLDYCDPDRTKYYQCLKELDEMEKHINLEKVIDDSDTSLKEITLDLETSSHASDSSESNDSQTDLLKLNSQIKTKKKQLKTKKERNSTIERHQNIREEEQEVCDKGHLVQRHKESDSDVTDTRPSISDDCIFDYFRRQLPNQGFFKILGLKFYCGYTHMISQTVIQKLSRDQQRCVLGTDKKNQETVQPRNNDLYGNCIKVTSLKCPLNKQTPIWTEKTRIPTEDLHHNLKSNMKECPSFQSKKADINWTDDEKRIYRDKNIAQTQEILQYLLPIMRSTKNVQTTQIKEVFNPRTSFQIQHQQKPSSNINIRKCSTSWTPPRNLPLISQRTLIVSTSKWLQPLDWKSSESSLPLGGPKKRRKYSRVKATKTKDMKAASSKWEMTPSSSEKDADKSLQAEGSSQQGTMQTAPHPTKTKGEQPKKKHGQPAFHLKLQRDT.

The disordered stretch occupies residues 1–23 (MSEDSEKEDYSDRTISDEDESDE). The 272-residue stretch at 299-570 (YPYTYTNLQE…HFCDSLLDYC (272 aa)) folds into the Peptidase M14 domain. The Zn(2+) site is built by H364, E367, and H460. The active-site Proton donor/acceptor is E534. 2 disordered regions span residues 642-662 (KQLKTKKERNSTIERHQNIRE) and 911-1003 (KSSE…QRDT). Over residues 649–662 (ERNSTIERHQNIRE) the composition is skewed to basic and acidic residues. The span at 922-934 (PKKRRKYSRVKAT) shows a compositional bias: basic residues. The segment covering 963–976 (AEGSSQQGTMQTAP) has biased composition (polar residues).

This sequence belongs to the peptidase M14 family. Requires Zn(2+) as cofactor.

The protein resides in the cytoplasm. It is found in the cytosol. The enzyme catalyses (L-glutamyl)(n+1)-gamma-L-glutamyl-L-glutamyl-[protein] + H2O = (L-glutamyl)(n)-gamma-L-glutamyl-L-glutamyl-[protein] + L-glutamate. Functionally, metallocarboxypeptidase that mediates deglutamylation of tubulin and non-tubulin target proteins. Catalyzes the removal of polyglutamate side chains present on the gamma-carboxyl group of glutamate residues within the C-terminal tail of tubulin protein. Specifically cleaves tubulin long-side-chains, while it is not able to remove the branching point glutamate. Also catalyzes the removal of polyglutamate residues from the carboxy-terminus of non-tubulin proteins such as MYLK. May catalyze the hydrolysis of aspartate from the carboxy-terminus of target proteins. Does not show detyrosinase or deglycylase activities from the carboxy-terminus of target proteins. In Bos taurus (Bovine), this protein is Cytosolic carboxypeptidase 3 (AGBL3).